The sequence spans 110 residues: UPF0060 membrane protein Swit_0423 (110 aa).

4 consecutive transmembrane segments (helical) span residues 6 to 26 (LFIF…FWAW), 29 to 49 (LGKS…FAWL), 61 to 81 (AFAA…WAVE), and 90 to 110 (LIGV…PRTA).

Belongs to the UPF0060 family.

The protein resides in the cell inner membrane. The chain is UPF0060 membrane protein Swit_0423 from Rhizorhabdus wittichii (strain DSM 6014 / CCUG 31198 / JCM 15750 / NBRC 105917 / EY 4224 / RW1) (Sphingomonas wittichii).